We begin with the raw amino-acid sequence, 158 residues long: Transcription elongation factor GreA (158 aa).

Residues 4–70 adopt a coiled-coil conformation; it reads QKQYPMTQEG…IEQDIQRIEH (67 aa).

Belongs to the GreA/GreB family.

Functionally, necessary for efficient RNA polymerase transcription elongation past template-encoded arresting sites. The arresting sites in DNA have the property of trapping a certain fraction of elongating RNA polymerases that pass through, resulting in locked ternary complexes. Cleavage of the nascent transcript by cleavage factors such as GreA or GreB allows the resumption of elongation from the new 3'terminus. GreA releases sequences of 2 to 3 nucleotides. The sequence is that of Transcription elongation factor GreA from Staphylococcus aureus (strain Mu3 / ATCC 700698).